The sequence spans 240 residues: Regulatory protein HlyX (240 aa).

The essential for the oxygen-regulated activity stretch occupies residues 15–28 (CTIHCQNCSISQLC). Residues 163–236 (MSAEEKLAAF…GKYITINRMD (74 aa)) form the HTH crp-type domain. The segment at residues 196-215 (RGDIGNYLGLTIETISRLLG) is a DNA-binding region (H-T-H motif).

The protein resides in the cytoplasm. Its function is as follows. Confers a hemolytic phenotype on E.coli. May regulate, rather than mediate, hemolytic activity. The sequence is that of Regulatory protein HlyX (hlyX) from Actinobacillus pleuropneumoniae (Haemophilus pleuropneumoniae).